Reading from the N-terminus, the 115-residue chain is Non-specific lipid-transfer protein Cw18 (115 aa).

The N-terminal stretch at 1–25 is a signal peptide; it reads MARTAATKLALVALVAAMLLVAADA. Intrachain disulfides connect C29–C77, C39–C54, C55–C97, and C75–C111.

It belongs to the plant LTP family. In terms of tissue distribution, highly expressed in leaves and coleoptiles. No expression in roots.

Its function is as follows. Plant non-specific lipid-transfer proteins transfer phospholipids as well as galactolipids across membranes. May play a role in wax or cutin deposition in the cell walls of expanding epidermal cells and certain secretory tissues. The protein is Non-specific lipid-transfer protein Cw18 (CW18) of Hordeum vulgare (Barley).